The following is a 584-amino-acid chain: 2-succinyl-5-enolpyruvyl-6-hydroxy-3-cyclohexene-1-carboxylate synthase (584 aa).

This sequence belongs to the TPP enzyme family. MenD subfamily. As to quaternary structure, homodimer. Requires Mg(2+) as cofactor. It depends on Mn(2+) as a cofactor. The cofactor is thiamine diphosphate.

It carries out the reaction isochorismate + 2-oxoglutarate + H(+) = 5-enolpyruvoyl-6-hydroxy-2-succinyl-cyclohex-3-ene-1-carboxylate + CO2. It functions in the pathway quinol/quinone metabolism; 1,4-dihydroxy-2-naphthoate biosynthesis; 1,4-dihydroxy-2-naphthoate from chorismate: step 2/7. It participates in quinol/quinone metabolism; menaquinone biosynthesis. Functionally, catalyzes the thiamine diphosphate-dependent decarboxylation of 2-oxoglutarate and the subsequent addition of the resulting succinic semialdehyde-thiamine pyrophosphate anion to isochorismate to yield 2-succinyl-5-enolpyruvyl-6-hydroxy-3-cyclohexene-1-carboxylate (SEPHCHC). In Bacillus thuringiensis (strain Al Hakam), this protein is 2-succinyl-5-enolpyruvyl-6-hydroxy-3-cyclohexene-1-carboxylate synthase.